A 211-amino-acid chain; its full sequence is Lysozyme g (211 aa).

Positions 1 to 26 (MLGKNDPMCLVLVLLGLTALLGICQG) are cleaved as a signal peptide. Cystine bridges form between Cys-30–Cys-86 and Cys-44–Cys-55. Residues Glu-99 and Asp-112 contribute to the active site.

This sequence belongs to the glycosyl hydrolase 23 family. In terms of tissue distribution, granulocyte compartment of myelomonocytic cells.

It localises to the secreted. It carries out the reaction Hydrolysis of (1-&gt;4)-beta-linkages between N-acetylmuramic acid and N-acetyl-D-glucosamine residues in a peptidoglycan and between N-acetyl-D-glucosamine residues in chitodextrins.. This chain is Lysozyme g, found in Gallus gallus (Chicken).